The sequence spans 286 residues: E3 SUMO-protein ligase K-bZIP (286 aa).

Disordered stretches follow at residues methionine 1–glutamate 22 and tryptophan 106–arginine 130.

Interacts with host HDAC1 and HDAC2, these interactions suppress HDAC activities. Interacts with protein ORF57. Interacts with protein vPK. Post-translationally, sumoylated.

Its pathway is protein modification; protein sumoylation. In terms of biological role, SUMO E3 ligase that plays a role in viral gene regulation and is essential for viral reactivation. Disrupts host G1 cell cycle control thus allowing viral transcription and translation to proceed at the early stages of infection. Catalyzes its own SUMO modification as well as that of its interacting partners such as host TP53 and RB1. Regulates viral gene expression and reactivation and may mediate the SUMOylation of viral promoters in the low methylated 'Lys-9' histone H3 (H3K9me) region which results in a diminution of viral gene expression after reactivation. SUMOylates also host histone lysine demethylase 4A/KDM4A, an essential step for complete enrichment of SUMO-2/3 on the viral genome during viral transactivation and reactivation. In Human herpesvirus 8 type P (isolate GK18) (HHV-8), this protein is E3 SUMO-protein ligase K-bZIP (K8).